The sequence spans 155 residues: Large ribosomal subunit protein eL24A (155 aa).

Residue S7 is modified to Phosphoserine. Positions E66–R155 are disordered. Basic and acidic residues predominate over residues L89–K129. Residues A131–Q142 show a composition bias toward polar residues.

The protein belongs to the eukaryotic ribosomal protein eL24 family. Component of the large ribosomal subunit (LSU). Mature yeast ribosomes consist of a small (40S) and a large (60S) subunit. The 40S small subunit contains 1 molecule of ribosomal RNA (18S rRNA) and 33 different proteins (encoded by 57 genes). The large 60S subunit contains 3 rRNA molecules (25S, 5.8S and 5S rRNA) and 46 different proteins (encoded by 81 genes).

The protein localises to the cytoplasm. In terms of biological role, component of the ribosome, a large ribonucleoprotein complex responsible for the synthesis of proteins in the cell. The small ribosomal subunit (SSU) binds messenger RNAs (mRNAs) and translates the encoded message by selecting cognate aminoacyl-transfer RNA (tRNA) molecules. The large subunit (LSU) contains the ribosomal catalytic site termed the peptidyl transferase center (PTC), which catalyzes the formation of peptide bonds, thereby polymerizing the amino acids delivered by tRNAs into a polypeptide chain. The nascent polypeptides leave the ribosome through a tunnel in the LSU and interact with protein factors that function in enzymatic processing, targeting, and the membrane insertion of nascent chains at the exit of the ribosomal tunnel. The protein is Large ribosomal subunit protein eL24A of Saccharomyces cerevisiae (strain ATCC 204508 / S288c) (Baker's yeast).